The chain runs to 138 residues: Acidic phospholipase A2 beta (138 aa).

The first 16 residues, 1–16 (MRTLWIVAVLLLGVEG), serve as a signal peptide directing secretion. 7 disulfide bridges follow: C42–C131, C44–C60, C59–C111, C65–C138, C66–C104, C73–C97, and C91–C102. 3 residues coordinate Ca(2+): Y43, G45, and G47. Residue H63 is part of the active site. D64 is a binding site for Ca(2+). D105 is a catalytic residue.

The protein belongs to the phospholipase A2 family. Group II subfamily. D49 sub-subfamily. As to quaternary structure, dimer. The cofactor is Ca(2+). As to expression, expressed by the venom gland.

Its subcellular location is the secreted. It carries out the reaction a 1,2-diacyl-sn-glycero-3-phosphocholine + H2O = a 1-acyl-sn-glycero-3-phosphocholine + a fatty acid + H(+). Functionally, PLA2 catalyzes the calcium-dependent hydrolysis of the 2-acyl groups in 3-sn-phosphoglycerides. The chain is Acidic phospholipase A2 beta from Crotalus adamanteus (Eastern diamondback rattlesnake).